Here is a 283-residue protein sequence, read N- to C-terminus: Tetraspanin-33 (283 aa).

Residues 1-24 (MARRPRAPAASGEEFSFVSPLVKY) are Cytoplasmic-facing. Residues 25-45 (LLFFFNMLFWVISMVMVAVGV) form a helical membrane-spanning segment. The Extracellular segment spans residues 46 to 64 (YARLMKHAEAALACLAVDP). Residues 65-85 (AILLIVVGVLMFLLTFCGCIG) form a helical membrane-spanning segment. Residues 86–96 (SLRENICLLQT) are Cytoplasmic-facing. A helical membrane pass occupies residues 97–117 (FSLCLTAVFLLQLAAGILGFV). At 118-235 (FSDKARGKVS…DKLVNWIHSN (118 aa)) the chain is on the extracellular side. Intrachain disulfides connect Cys156-Cys224, Cys157-Cys189, Cys173-Cys183, and Cys190-Cys203. Asn172 carries N-linked (GlcNAc...) asparagine glycosylation. A helical membrane pass occupies residues 236-256 (LFLLGGVALGLAIPQLVGILL). Over 257–283 (SQILVNQIKDQIKLQLYNQQHRADPWY) the chain is Cytoplasmic.

It belongs to the tetraspanin (TM4SF) family. Homodimer; disulfide-linked. Interacts (via extracellular domain) with ADAM10 (via extracellular domain). Interacts (via cytoplasmic domain) with PLEKHA7 (via WW domains); the interaction is dependent on PDZD11 being bound to PLEKHA7 and facilitates the docking of ADAM10 to zonula adherens. In terms of tissue distribution, predominantly expressed in erythroblasts.

It localises to the cell membrane. The protein localises to the cell junction. It is found in the adherens junction. Its subcellular location is the cytoplasm. Part of TspanC8 subgroup, composed of 6 members that interact with the transmembrane metalloprotease ADAM10. This interaction is required for ADAM10 exit from the endoplasmic reticulum and for enzymatic maturation and trafficking to the cell surface as well as substrate specificity. Different TspanC8/ADAM10 complexes have distinct substrates. Plays an important role in normal erythropoiesis. It has a role in the differentiation of erythroid progenitors. Negatively regulates ligand-induced Notch activity probably by regulating ADAM10 activity. Mediates docking of ADAM10 to zonula adherens by interacting with ADAM10 and, in a PDZD11-dependent manner, with the zonula adherens protein PLEKHA7. The chain is Tetraspanin-33 from Homo sapiens (Human).